A 205-amino-acid polypeptide reads, in one-letter code: Protein N-terminal glutamine amidohydrolase (205 aa).

Residues C20, H74, and D90 contribute to the active site.

It belongs to the NTAQ1 family. In terms of assembly, monomer.

The enzyme catalyses N-terminal L-glutaminyl-[protein] + H2O = N-terminal L-glutamyl-[protein] + NH4(+). Its function is as follows. Mediates the side-chain deamidation of N-terminal glutamine residues to glutamate, an important step in N-end rule pathway of protein degradation. Conversion of the resulting N-terminal glutamine to glutamate renders the protein susceptible to arginylation, polyubiquitination and degradation as specified by the N-end rule. Does not act on substrates with internal or C-terminal glutamine and does not act on non-glutamine residues in any position. The chain is Protein N-terminal glutamine amidohydrolase (tun) from Drosophila pseudoobscura pseudoobscura (Fruit fly).